Here is a 236-residue protein sequence, read N- to C-terminus: Bax inhibitor 1 (236 aa).

Residues 1–29 are Cytoplasmic-facing; the sequence is MNIFDRKINFDALFKFSHITPSTQQHLKK. Residue Lys7 forms a Glycyl lysine isopeptide (Lys-Gly) (interchain with G-Cter in ubiquitin) linkage. The helical transmembrane segment at 30–50 threads the bilayer; sequence VYASFALCMFVAAAGAYIHVV. Residues 51-52 are Lumenal-facing; sequence TH. Residues 53–73 traverse the membrane as a helical segment; sequence FIQAGLLSALGSLGLMIWLMA. Residues 74–86 are Cytoplasmic-facing; the sequence is TPHSHETEQKRLG. The chain crosses the membrane as a helical span at residues 87–107; that stretch reads LLAGFAFLTGVGLGPALDLCI. Residues 108–112 are Lumenal-facing; that stretch reads AINPS. The chain crosses the membrane as a helical span at residues 113-133; the sequence is ILPTAFMGTAMIFTCFTLSAL. Over 134-139 the chain is Cytoplasmic; that stretch reads YARRRS. Residues 140–160 form a helical membrane-spanning segment; it reads YLFLGGILMSAMSLMLLSSLG. The Lumenal segment spans residues 161–166; that stretch reads NLFFGS. Residues 167 to 187 traverse the membrane as a helical segment; the sequence is VWLFQANLYMGLVVMCGFVLF. At 188–206 the chain is on the cytoplasmic side; the sequence is DTQLIIEKAENGDKDYIWH. The helical intramembrane region spans 207-227; sequence CVDLFLDFVTLFRKLMMILAM. Over 228 to 236 the chain is Cytoplasmic; it reads NEKDKKKKK.

Belongs to the BI1 family. Interacts with BCL2 and BCL2L1. Interacts with ERN1. Ubiquitinated by BFAR, leading to proteasomal degradation.

Its subcellular location is the endoplasmic reticulum membrane. Its function is as follows. Endoplasmic reticulum (ER)-resident protein that confers cellular protection as an anti-apoptotic protein by limiting multiple stress-inducing pathways surrounding the endoplasmic reticulum and mitochondria. Inhibits the activities of the key sensor for the endoplasmic reticulum unfolded protein response IRE1alpha/ERN1 both directly and by blocking BAX/BAK binding. Modulates ER calcium homeostasis by acting as a calcium-leak channel. Negatively regulates autophagy and autophagosome formation, especially during periods of nutrient deprivation, and reduces cell survival during starvation. The sequence is that of Bax inhibitor 1 (TMBIM6) from Bos taurus (Bovine).